A 340-amino-acid chain; its full sequence is Glyceraldehyde-3-phosphate dehydrogenase (340 aa).

Residues 11–12 and glycine 109 each bind NAD(+); that span reads TI. D-glyceraldehyde 3-phosphate is bound at residue 138–140; it reads SCN. Cysteine 139 serves as the catalytic Nucleophile. Arginine 167 lines the NAD(+) pocket. D-glyceraldehyde 3-phosphate is bound at residue 193-194; sequence HA. Glutamine 300 contacts NAD(+).

The protein belongs to the glyceraldehyde-3-phosphate dehydrogenase family. As to quaternary structure, homotetramer.

It localises to the cytoplasm. The enzyme catalyses D-glyceraldehyde 3-phosphate + phosphate + NADP(+) = (2R)-3-phospho-glyceroyl phosphate + NADPH + H(+). The catalysed reaction is D-glyceraldehyde 3-phosphate + phosphate + NAD(+) = (2R)-3-phospho-glyceroyl phosphate + NADH + H(+). It participates in carbohydrate degradation; glycolysis; pyruvate from D-glyceraldehyde 3-phosphate: step 1/5. This chain is Glyceraldehyde-3-phosphate dehydrogenase, found in Saccharolobus islandicus (strain L.S.2.15 / Lassen #1) (Sulfolobus islandicus).